We begin with the raw amino-acid sequence, 589 residues long: MNFDNTVHESNFDDLLHNPNFPPQFDQLELDSLLYGTDESQESTSSSSFGFSDQNAGFRSRDGGSLGDSSSDSSPPLSCANFTENDQEMWDFGFQSRSPFENFEQQFGSPYQDDEVIAEPTNEFMNARYLREEPAKHLPMQQKRIITILPKQSQPVKRIVSRPIQKVYRVKESPGSQQQTYRVVQPLMPSPSQATQRQIKQMYYNEPVQEIHMQPKSGPLVRQVSEEPRYVPIAPTVDIKAEPQVFTSEQNRKIRNRMYAQASRMRKKEADEHMKMNLQELLQENEILRTENAALKQRLAFFEHEEPVVEVPQPFGRNQKKKRIIAAGSVLMMFGLFAVISPFNVDNNLNINNQIMAISNETSMVARHGRVITYEDSAPVAKIPTQQPIHNYPNSTQNDCDMYKLNATETIRVNNDIERWVQVHSFDNVPMKFSGGLLNKEAMRKFNYAQKVKPASVYGPQTLAVQKKSEQAALRSRERTWKQLDLLKTGNNIQLDNEKIQRKRQDIDKIASIVRQKGDTLYIMTLQDYVLLPSLIKGANSVPKLSLLLPSVPMNGTLQDQYTLLRVDCEVTGTGQLTLSNKQLSYLMP.

A compositionally biased stretch (basic and acidic residues) spans 1–16 (MNFDNTVHESNFDDLL). The interval 1 to 82 (MNFDNTVHES…SSPPLSCANF (82 aa)) is disordered. Low complexity-rich tracts occupy residues 36-54 (GTDESQESTSSSSFGFSDQ) and 67-78 (GDSSSDSSPPLS). Positions 250-299 (QNRKIRNRMYAQASRMRKKEADEHMKMNLQELLQENEILRTENAALKQRL) constitute a bZIP domain. Positions 252–275 (RKIRNRMYAQASRMRKKEADEHMK) are basic motif. Residues 271 to 305 (DEHMKMNLQELLQENEILRTENAALKQRLAFFEHE) are a coiled coil. The interval 281–295 (LLQENEILRTENAAL) is leucine-zipper. A helical transmembrane segment spans residues 324-344 (IIAAGSVLMMFGLFAVISPFN).

Belongs to the bZIP family. ATF subfamily.

It is found in the nucleus. The protein localises to the membrane. Its function is as follows. Transcription factor. Plays a role in the unfolded protein response (UPR), perhaps mainly during constitutive endoplasmic reticulum (ER) stress, by activating transcription of genes involved in the UPR. Plays a role in modulating lifespan, acting by positively regulating expression of calcium-binding chaperone crt-1, thereby influencing ER calcium homeostasis. By activating the UPR pathway, confers adaptive protection to subsequent exposure to hypoxia. Involved in protection against proteotoxicity, probably acting via the UPR. Probably acts in the UPR in parallel with the ire-1-xbp-1 and pek-1 pathways. May be regulated by endopeptidase S2P-mediated proteolytic cleavage. The sequence is that of Transcription factor atf-6 homolog from Caenorhabditis elegans.